Reading from the N-terminus, the 312-residue chain is Nucleosome assembly protein 1-like 4 (312 aa).

Residues 24-78 (VETLKNKLQALAEQHVDVLESLAPSVRKRVDVLMEIQSQHDELEVKFFEEKAALE) are a coiled coil. Positions 45–60 (LAPSVRKRVDVLMEIQ) match the Nuclear export signal motif. Positions 289 to 312 (DYGASWVDDEEEDDNNDEYSDEEA) are disordered.

It belongs to the nucleosome assembly protein (NAP) family.

Its subcellular location is the nucleus. The protein resides in the cytoplasm. May modulate chromatin structure by regulation of nucleosome assembly/disassembly. The polypeptide is Nucleosome assembly protein 1-like 4 (Oryza sativa subsp. japonica (Rice)).